Reading from the N-terminus, the 729-residue chain is Glutamine synthetase (729 aa).

The GS beta-grasp domain maps to 85 to 174 (THYTHWFQPL…IPTIFISYTG (90 aa)). In terms of domain architecture, GS catalytic spans 179–615 (YKTPLLKALA…VLGDLAINHI (437 aa)). Positions 215, 217, 286, and 293 each coordinate Mg(2+). L-glutamate contacts are provided by residues 337-338 (NG) and Gly338. Mg(2+) is bound at residue His342. Ser346 and Arg458 together coordinate ATP. Arg458 provides a ligand contact to L-glutamate.

This sequence belongs to the glutamine synthetase family. Homohexamer. The cofactor is Mg(2+).

Its subcellular location is the cytoplasm. The enzyme catalyses L-glutamate + NH4(+) + ATP = L-glutamine + ADP + phosphate + H(+). Its activity is regulated as follows. Inhibited by L-histidine (46%), L-arginine (38%) and L-methionine-DL-sulphoximine. The activity of this enzyme is not controlled by adenylation. Functionally, catalyzes the ATP-dependent biosynthesis of glutamine from glutamate and ammonia. The protein is Glutamine synthetase of Bacteroides fragilis (strain YCH46).